Consider the following 366-residue polypeptide: tRNA/tmRNA (uracil-C(5))-methyltransferase (366 aa).

Positions 189, 217, 222, 238, and 298 each coordinate S-adenosyl-L-methionine. C323 serves as the catalytic Nucleophile. Residue E357 is the Proton acceptor of the active site.

It belongs to the class I-like SAM-binding methyltransferase superfamily. RNA M5U methyltransferase family. TrmA subfamily.

It carries out the reaction uridine(54) in tRNA + S-adenosyl-L-methionine = 5-methyluridine(54) in tRNA + S-adenosyl-L-homocysteine + H(+). The enzyme catalyses uridine(341) in tmRNA + S-adenosyl-L-methionine = 5-methyluridine(341) in tmRNA + S-adenosyl-L-homocysteine + H(+). Its function is as follows. Dual-specificity methyltransferase that catalyzes the formation of 5-methyluridine at position 54 (m5U54) in all tRNAs, and that of position 341 (m5U341) in tmRNA (transfer-mRNA). The polypeptide is tRNA/tmRNA (uracil-C(5))-methyltransferase (Photorhabdus laumondii subsp. laumondii (strain DSM 15139 / CIP 105565 / TT01) (Photorhabdus luminescens subsp. laumondii)).